The following is a 140-amino-acid chain: MPLMPKRVKHRKMHRGSRSGNATSGTYVAFGDFGLQVLDRGWITNNQIEACRIAINRYLKRKGKVFIRIFPQKSFTSRPPDTRMGKGKGAVEGWVAVVRPGNILFEVGGVTESQAREALRLASNKLGVSTRFVYRQGVQH.

Over residues Met-1 to Ser-17 the composition is skewed to basic residues. The disordered stretch occupies residues Met-1 to Asn-21.

Belongs to the universal ribosomal protein uL16 family. In terms of assembly, part of the 50S ribosomal subunit.

In terms of biological role, binds 23S rRNA and is also seen to make contacts with the A and possibly P site tRNAs. The polypeptide is Large ribosomal subunit protein uL16 (Akkermansia muciniphila (strain ATCC BAA-835 / DSM 22959 / JCM 33894 / BCRC 81048 / CCUG 64013 / CIP 107961 / Muc)).